The following is a 472-amino-acid chain: Uronate isomerase (472 aa).

It belongs to the metallo-dependent hydrolases superfamily. Uronate isomerase family.

The enzyme catalyses D-glucuronate = D-fructuronate. It catalyses the reaction aldehydo-D-galacturonate = keto-D-tagaturonate. The protein operates within carbohydrate metabolism; pentose and glucuronate interconversion. This Xanthomonas oryzae pv. oryzae (strain MAFF 311018) protein is Uronate isomerase.